The following is a 72-amino-acid chain: Translation initiation factor IF-1 (72 aa).

Positions 1–72 constitute an S1-like domain; that stretch reads MAKEDVIEVE…NRGRIIYRFK (72 aa).

The protein belongs to the IF-1 family. As to quaternary structure, component of the 30S ribosomal translation pre-initiation complex which assembles on the 30S ribosome in the order IF-2 and IF-3, IF-1 and N-formylmethionyl-tRNA(fMet); mRNA recruitment can occur at any time during PIC assembly.

The protein localises to the cytoplasm. In terms of biological role, one of the essential components for the initiation of protein synthesis. Stabilizes the binding of IF-2 and IF-3 on the 30S subunit to which N-formylmethionyl-tRNA(fMet) subsequently binds. Helps modulate mRNA selection, yielding the 30S pre-initiation complex (PIC). Upon addition of the 50S ribosomal subunit IF-1, IF-2 and IF-3 are released leaving the mature 70S translation initiation complex. The protein is Translation initiation factor IF-1 of Syntrophomonas wolfei subsp. wolfei (strain DSM 2245B / Goettingen).